A 142-amino-acid chain; its full sequence is Probable signal recognition particle 19 kDa protein (142 aa).

The disordered stretch occupies residues 115–142; it reads KTRQPGYTAPSVASSSAAAAGKKNKKKK. Over residues 123–135 the composition is skewed to low complexity; it reads APSVASSSAAAAG.

It belongs to the SRP19 family. As to quaternary structure, component of a signal recognition particle complex that consists of a 7SL RNA molecule of 300 nucleotides and six protein subunits: srpa-72, srpa-68, SRP54, F37F2.2/SRP19, F25G6.8/SRP14 and ZK512.4/SRP9.

Its subcellular location is the cytoplasm. The protein resides in the nucleus. It localises to the nucleolus. Its function is as follows. Component of the signal recognition particle (SRP) complex, a ribonucleoprotein complex that mediates the cotranslational targeting of secretory and membrane proteins to the endoplasmic reticulum (ER). Binds directly to 7SL RNA. Mediates binding of SRP54 to the SRP complex. This chain is Probable signal recognition particle 19 kDa protein, found in Caenorhabditis elegans.